The following is a 107-amino-acid chain: MFSTSDQVSKMNSRILSALLILGIATCVIAGGFCPKSRHPQCNLSYKINDCCAQSDCRVGSVCCVEGCGNVCRAESDTPLGEKFVDGSECKHGHVFPKKWYQFWWRV.

Positions 1–30 (MFSTSDQVSKMNSRILSALLILGIATCVIA) are cleaved as a signal peptide. One can recognise a WAP domain in the interval 31-76 (GGFCPKSRHPQCNLSYKINDCCAQSDCRVGSVCCVEGCGNVCRAES). 5 disulfide bridges follow: C34–C64, C42–C68, C51–C63, C52–C90, and C57–C72.

Belongs to the venom protein 11 family. 02 (wap-2) subfamily. In terms of processing, contains 5 disulfide bonds. In terms of tissue distribution, expressed by the venom gland.

The protein localises to the secreted. Has antibacterial activity. In Lycosa singoriensis (Wolf spider), this protein is U20-lycotoxin-Ls1b.